We begin with the raw amino-acid sequence, 155 residues long: MADIKNNPEYSSFFGVMGASSAMVFSAMGAAYGTAKSGTGIAAMSVMRPELIMKSIIPVVMAGIIAIYGLVVAVLIANSLTDGITLYRSFLQLGAGLSVGLSGLAAGFAIGIVGDAGVRGTAQQPRLFVGMILILIFAEVLGLYGLIVALILSTK.

Topologically, residues 1-10 (MADIKNNPEY) are lumenal. The helical transmembrane segment at 11–33 (SSFFGVMGASSAMVFSAMGAAYG) threads the bilayer. Residues 34 to 55 (TAKSGTGIAAMSVMRPELIMKS) are Cytoplasmic-facing. A helical transmembrane segment spans residues 56 to 76 (IIPVVMAGIIAIYGLVVAVLI). Residues 77–92 (ANSLTDGITLYRSFLQ) lie on the Lumenal side of the membrane. Residues 93-114 (LGAGLSVGLSGLAAGFAIGIVG) form a helical membrane-spanning segment. Residues 115-131 (DAGVRGTAQQPRLFVGM) lie on the Cytoplasmic side of the membrane. Residues 132 to 152 (ILILIFAEVLGLYGLIVALIL) traverse the membrane as a helical segment. Over 153–155 (STK) the chain is Lumenal.

It belongs to the V-ATPase proteolipid subunit family. As to quaternary structure, V-ATPase is a heteromultimeric enzyme made up of two complexes: the ATP-hydrolytic V1 complex and the proton translocation V0 complex. The V1 complex consists of three catalytic AB heterodimers that form a heterohexamer, three peripheral stalks each consisting of EG heterodimers, one central rotor including subunits D and F, and the regulatory subunits C and H. The proton translocation complex V0 consists of the proton transport subunit a, a ring of proteolipid subunits c9c'', rotary subunit d, subunits e and f, and the accessory subunits ATP6AP1/Ac45 and ATP6AP2/PRR. Interacts with the V0 complex V-ATPase subunit a4 ATP6V0A4. Interacts with LASS2. Interacts with RNF182; this interaction leads to ubiquitination and degradation via the proteasome pathway. Ubiquitinated by RNF182, leading to its degradation via the ubiquitin-proteasome pathway.

It is found in the cytoplasmic vesicle. The protein localises to the clathrin-coated vesicle membrane. The protein resides in the secretory vesicle. Its subcellular location is the synaptic vesicle membrane. In terms of biological role, proton-conducting pore forming subunit of the V0 complex of vacuolar(H+)-ATPase (V-ATPase), a multisubunit enzyme composed of a peripheral complex (V1) that hydrolyzes ATP and a membrane integral complex (V0) that translocates protons. V-ATPase is responsible for acidifying and maintaining the pH of intracellular compartments and in some cell types, is targeted to the plasma membrane, where it is responsible for acidifying the extracellular environment. This chain is V-type proton ATPase 16 kDa proteolipid subunit c (Atp6v0c), found in Mus musculus (Mouse).